A 747-amino-acid chain; its full sequence is DNA ligase 1 (747 aa).

The segment at 1-84 (MQKSITSFFK…KEVDDKTTDK (84 aa)) is disordered. Phosphoserine is present on residues serine 18, serine 20, serine 42, serine 44, serine 46, serine 60, and serine 65. The segment covering 26 to 42 (PKIDAKTELPDEPHIKS) has biased composition (basic and acidic residues). Residues 60–84 (SEEKTSPVKNVKKEPKEVDDKTTDK) show a composition bias toward basic and acidic residues. Lysine 395 (N6-AMP-lysine intermediate) is an active-site residue. Polar residues predominate over residues 725-740 (QSQDQVKNNQKSSTQM). The segment at 725-747 (QSQDQVKNNQKSSTQMEMEDEFY) is disordered.

It belongs to the ATP-dependent DNA ligase family.

It is found in the nucleus. It carries out the reaction ATP + (deoxyribonucleotide)n-3'-hydroxyl + 5'-phospho-(deoxyribonucleotide)m = (deoxyribonucleotide)n+m + AMP + diphosphate.. Its function is as follows. DNA ligase that seals nicks in double-stranded DNA during DNA replication, DNA recombination and DNA repair. The protein is DNA ligase 1 of Drosophila melanogaster (Fruit fly).